The primary structure comprises 129 residues: N16.5 matrix protein (129 aa).

A signal peptide spans 1–23 (MTCTLRWTITALVLLGICHLARP). Repeat copies occupy residues 91–92 (NG), 93–94 (NG), 95–96 (NG), 97–98 (NG), and 99–100 (NG). The tract at residues 91 to 100 (NGNGNGNGNG) is 5 X 2 AA tandem repeats of N-G.

Belongs to the N16 matrix protein family. As to quaternary structure, heterooligomer; disulfide-linked. Pif97, Pif80, N16 and other proteins form a complex. As to expression, component of conchiolin, the organic matrix of nacre. Specifically expressed in mantle epithelium.

It localises to the secreted. Its subcellular location is the extracellular space. The protein resides in the extracellular matrix. Its function is as follows. May be specifically involved in the formation of the nacreous layer. The protein is N16.5 matrix protein of Pinctada fucata (Akoya pearl oyster).